The primary structure comprises 445 residues: O-fucosyltransferase 23 (445 aa).

The chain crosses the membrane as a helical; Signal-anchor for type II membrane protein span at residues 12 to 34 (IFSKSVACKCLVLVGIALFYRAL). N-linked (GlcNAc...) asparagine glycans are attached at residues Asn-97 and Asn-179. A substrate-binding site is contributed by 258 to 260 (HMR). Residue Asn-294 is glycosylated (N-linked (GlcNAc...) asparagine). Substrate is bound at residue 374 to 375 (TF). A glycan (N-linked (GlcNAc...) asparagine) is linked at Asn-424.

The protein belongs to the glycosyltransferase GT106 family. As to expression, expressed in dry pollen grains and germinating pollen grains.

It is found in the golgi apparatus membrane. Its pathway is glycan metabolism. Functionally, probable protein O-fucosyltransferase required for correct pollen tube penetration through the stigma-style interface. May be involved in protein O-glycosylation events during pollen-pistil interactions. The sequence is that of O-fucosyltransferase 23 from Arabidopsis thaliana (Mouse-ear cress).